A 344-amino-acid chain; its full sequence is Hydrophobic dipeptide epimerase (344 aa).

Substrate contacts are provided by residues Thr126 and 151–153; that span reads KIK. The Mg(2+) site is built by Asp184, Glu210, and Asp235. Substrate contacts are provided by residues Lys257 and 307 to 309; that span reads DLD.

The protein belongs to the mandelate racemase/muconate lactonizing enzyme family. The cofactor is Mg(2+).

In terms of biological role, dipeptide epimerase with a preference for hydrophobic substrates. Catalyzes the epimerization of L-Ala-L-Thr, L-Ala-L-Met, L-Ala-L-His, L-Ala-L-Phe, L-Ala-L-Tyr, L-Ala-L-Trp, L-Ile-L-Ala, L-Ile-L-Ser, L-Ile-L-Met, L-Ile-L-His, L-Ile-L-Phe, L-Ile-L-Tyr, L-Ile-L-Trp, L-Phe-L-Met, L-Phe-L-His, L-Phe-L-Phe, L-Phe-L-Tyr, L-Phe-L-Trp, L-Phe-L-Ser, L-Phe-L-Thr and L-Phe-L-Lys (in vitro). This is Hydrophobic dipeptide epimerase from Roseobacter litoralis (strain ATCC 49566 / DSM 6996 / JCM 21268 / NBRC 15278 / OCh 149).